A 232-amino-acid polypeptide reads, in one-letter code: Large ribosomal subunit protein uL1 (232 aa).

The protein belongs to the universal ribosomal protein uL1 family. Part of the 50S ribosomal subunit.

Functionally, binds directly to 23S rRNA. The L1 stalk is quite mobile in the ribosome, and is involved in E site tRNA release. Protein L1 is also a translational repressor protein, it controls the translation of the L11 operon by binding to its mRNA. This chain is Large ribosomal subunit protein uL1, found in Xylella fastidiosa (strain M12).